Here is a 427-residue protein sequence, read N- to C-terminus: Glutamate-1-semialdehyde 2,1-aminomutase (427 aa).

The residue at position 265 (lysine 265) is an N6-(pyridoxal phosphate)lysine.

The protein belongs to the class-III pyridoxal-phosphate-dependent aminotransferase family. HemL subfamily. Homodimer. The cofactor is pyridoxal 5'-phosphate.

The protein localises to the cytoplasm. The catalysed reaction is (S)-4-amino-5-oxopentanoate = 5-aminolevulinate. The protein operates within porphyrin-containing compound metabolism; protoporphyrin-IX biosynthesis; 5-aminolevulinate from L-glutamyl-tRNA(Glu): step 2/2. The chain is Glutamate-1-semialdehyde 2,1-aminomutase from Idiomarina loihiensis (strain ATCC BAA-735 / DSM 15497 / L2-TR).